Consider the following 568-residue polypeptide: Protein KATNIP homolog (568 aa).

Over residues 1-20 (MSDSDLKEIEKNAENIKLEP) the composition is skewed to basic and acidic residues. Positions 1–30 (MSDSDLKEIEKNAENIKLEPAEDEVNEEDQ) are disordered. Positions 21-30 (AEDEVNEEDQ) are enriched in acidic residues.

In terms of tissue distribution, expressed in most ciliated neuronal cells. Not expressed in non-ciliated cells.

Its subcellular location is the cytoplasm. The protein resides in the cytoskeleton. It is found in the cilium axoneme. It localises to the cilium basal body. Its function is as follows. May regulate ciliary A-tubule number and, along with arl-13, controls cilium integrity. This is Protein KATNIP homolog from Caenorhabditis elegans.